The primary structure comprises 84 residues: Kappa-conotoxin-like Im11.3 (84 aa).

A signal peptide spans 1–26 (MMFRLTSVSCFLLVIACLNLFQVVLT). Cystine bridges form between Cys-29/Cys-43, Cys-36/Cys-48, Cys-42/Cys-51, and Cys-47/Cys-64. Positions 71 to 84 (LRPSHPLFLLLPAR) are excised as a propeptide.

This sequence belongs to the conotoxin I2 superfamily. Expressed by the venom duct.

It is found in the secreted. Its function is as follows. Inhibits the vertebrate voltage-gated potassium channels Kv1.1/KCNA1 and Kv1.3/KCNA3. This chain is Kappa-conotoxin-like Im11.3, found in Conus imperialis (Imperial cone).